Here is a 90-residue protein sequence, read N- to C-terminus: Cuticle protein 9.5 (90 aa).

In terms of biological role, component of the cuticle of migratory locust which contains more than 100 different structural proteins. This Locusta migratoria (Migratory locust) protein is Cuticle protein 9.5.